The chain runs to 152 residues: MIALIQRVRRAEVRVGDRVTGAIDAGLLALVCAERGDTDAVADKLLAKVLGYRVFSDAAGKMNLPVQNIDGAGRAGGLLLVSQFTLAADTNSGLRPSFTPAAPPDEGKRLFDYFVAAARAKHAIVETGEFGAEMQVSLVNDGPVTFWLQTRA.

The Gly-cisPro motif, important for rejection of L-amino acids motif lies at 142 to 143; it reads GP.

Belongs to the DTD family. In terms of assembly, homodimer.

The protein resides in the cytoplasm. The catalysed reaction is glycyl-tRNA(Ala) + H2O = tRNA(Ala) + glycine + H(+). It catalyses the reaction a D-aminoacyl-tRNA + H2O = a tRNA + a D-alpha-amino acid + H(+). In terms of biological role, an aminoacyl-tRNA editing enzyme that deacylates mischarged D-aminoacyl-tRNAs. Also deacylates mischarged glycyl-tRNA(Ala), protecting cells against glycine mischarging by AlaRS. Acts via tRNA-based rather than protein-based catalysis; rejects L-amino acids rather than detecting D-amino acids in the active site. By recycling D-aminoacyl-tRNA to D-amino acids and free tRNA molecules, this enzyme counteracts the toxicity associated with the formation of D-aminoacyl-tRNA entities in vivo and helps enforce protein L-homochirality. The protein is D-aminoacyl-tRNA deacylase of Paraburkholderia phymatum (strain DSM 17167 / CIP 108236 / LMG 21445 / STM815) (Burkholderia phymatum).